Here is a 346-residue protein sequence, read N- to C-terminus: 3-dehydroquinate synthase (346 aa).

Residues 62–67 (DGEQYK), 96–100 (GVISD), 120–121 (TT), K133, and K142 contribute to the NAD(+) site. Zn(2+) contacts are provided by E175, H234, and H251.

The protein belongs to the sugar phosphate cyclases superfamily. Dehydroquinate synthase family. The cofactor is Co(2+). Requires Zn(2+) as cofactor. NAD(+) serves as cofactor.

Its subcellular location is the cytoplasm. The enzyme catalyses 7-phospho-2-dehydro-3-deoxy-D-arabino-heptonate = 3-dehydroquinate + phosphate. Its pathway is metabolic intermediate biosynthesis; chorismate biosynthesis; chorismate from D-erythrose 4-phosphate and phosphoenolpyruvate: step 2/7. In terms of biological role, catalyzes the conversion of 3-deoxy-D-arabino-heptulosonate 7-phosphate (DAHP) to dehydroquinate (DHQ). The polypeptide is 3-dehydroquinate synthase (Campylobacter fetus subsp. fetus (strain 82-40)).